We begin with the raw amino-acid sequence, 199 residues long: Ribonuclease P protein subunit p25 (199 aa).

Residues 1 to 11 show a composition bias toward basic and acidic residues; that stretch reads MENFRKVRSEE. Disordered stretches follow at residues 1 to 31 and 146 to 199; these read MENF…FADL and PRQL…DRTA. Ser-172 carries the post-translational modification Phosphoserine. Residues 190-199 are compositionally biased toward acidic residues; that stretch reads PEAENEDRTA.

It belongs to the histone-like Alba family. In terms of assembly, component of nuclear RNase P and RNase MRP ribonucleoproteins. RNase P consists of a catalytic RNA moiety and 10 different protein chains; POP1, POP4, POP5, POP7, RPP14, RPP21, RPP25, RPP30, RPP38 and RPP40. Within the RNase P complex, POP1, POP7 and RPP25 form the 'finger' subcomplex, POP5, RPP14, RPP40 and homodimeric RPP30 form the 'palm' subcomplex, and RPP21, POP4 and RPP38 form the 'wrist' subcomplex. All subunits of the RNase P complex interact with the catalytic RNA. Several subunits of RNase P are also part of the RNase MRP complex. RNase MRP consists of a catalytic RNA moiety and about 8 protein subunits; POP1, POP7, RPP25, RPP30, RPP38, RPP40 and possibly also POP4 and POP5. POP7 forms a heterodimer with RPP25 that binds to the P3 stem loop of the catalytic RNA.

Its subcellular location is the nucleus. The protein resides in the nucleolus. Functionally, component of ribonuclease P, a ribonucleoprotein complex that generates mature tRNA molecules by cleaving their 5'-ends. Also a component of the MRP ribonuclease complex, which cleaves pre-rRNA sequences. In Mus musculus (Mouse), this protein is Ribonuclease P protein subunit p25 (Rpp25).